The primary structure comprises 1480 residues: ABC transporter G family member 49 (1480 aa).

The segment covering 1 to 18 has biased composition (polar residues); the sequence is MHTTTQATPQKSMVMTTT. Disordered regions lie at residues 1 to 42, 60 to 81, and 104 to 124; these read MHTT…AGSS, VSGELGGGGGGGGGGREKEDDE, and SSTRGGGSSGDVSEGGGGGAA. 2 stretches are compositionally biased toward gly residues: residues 63–73 and 107–123; these read ELGGGGGGGGG and RGGGSSGDVSEGGGGGA. Residues 212-485 form the ABC transporter 1 domain; sequence LAAKLGFSHH…FESCGFKCPE (274 aa). 245 to 252 contributes to the ATP binding site; sequence GPPGCGKT. Positions 563–775 constitute an ABC transmembrane type-2 1 domain; the sequence is HLLKACFDRE…AEIGLTGNEF (213 aa). A run of 6 helical transmembrane segments spans residues 581–601, 619–639, 656–676, 699–719, 725–745, and 811–831; these read FLHITKAVQLGLLAIITGTVF, SLFYALILLMVNGIPELVMSI, GWAYAIPAFILKIPASLVAAL, LLVLFLVHTGALSLYRCVGSY, VGPIAATMSLLVILLFGGFLI, and VAALIGFILLYNIGFAIGLTI. The ABC transporter 2 domain maps to 877-1129; the sequence is ISFQDVNYYV…KVIQYFQSIP (253 aa). Residue 922 to 929 participates in ATP binding; the sequence is GVTGAGKT. The ABC transmembrane type-2 2 domain occupies 1202–1418; it reads EQFKACLWKQ…TLNLLFTTQF (217 aa). Helical transmembrane passes span 1226–1246, 1254–1274, 1311–1331, 1340–1360, 1368–1388, 1396–1416, and 1449–1469; these read IVFMAFSSIIFGVLYWQQGNI, GLFTILGCMYGITIFTGINNS, IPYVLMLALLFMLIAYPTIGY, WFFYTMFCTLLYFVYFGMLIV, VASIYASSFYMTQHLLSGFVM, WWIWLYYISPMSWTLNLLFTT, and LLPLSAIILAAYPVLFAILYG.

It belongs to the ABC transporter superfamily. ABCG family. PDR (TC 3.A.1.205) subfamily.

It is found in the membrane. Its function is as follows. May be a general defense protein. This is ABC transporter G family member 49 from Oryza sativa subsp. japonica (Rice).